A 239-amino-acid polypeptide reads, in one-letter code: MNRSTPVFNSQAAHTFKFPGVISHNNQSPTAGMTCDHLIKWPDRASLKGKFCSYLAGVCGSSSVVIQNVNAGNKSLDHSEITFRHLAFFCTIYHLHQSDRTDAHSPLVQVKTFPDTGGFVLYRKNADVGIEHKLQHQNDSLSCIPGCSLLSIKSALTLFPSNHSSHVSPAGVMIRVRPTAITSTRFTFSGNATAFGSLTAWLRLLRNTVVSIICLLMWICLVYIHCGIDAGICQRDIRL.

A helical membrane pass occupies residues 208–228 (TVVSIICLLMWICLVYIHCGI).

It is found in the cell inner membrane. The sequence is that of Protein TrbH (trbH) from Escherichia coli (strain K12).